The following is a 151-amino-acid chain: Small ribosomal subunit protein uS15 (151 aa).

This sequence belongs to the universal ribosomal protein uS15 family.

This Choristoneura parallela (Spotted fireworm moth) protein is Small ribosomal subunit protein uS15 (RpS13).